The sequence spans 208 residues: MLIKYCGIRSKQDIALIEKSAATHIGFIFYPRSKRYVKPERVNEFVTDEIKKQVSLVGVFVNTPVDQILEIASVTNLDVIQCHGQETAADVRQLKQRGYEVWKALPHNKETLQQMHVYEEADGYVIDSKVKEQFGGTGVAFDWSFVPQYESAAQRLGKKCFIAGGINACNIENLLPYQPGAIDISGGIETNGTKDYTKIIEIERKIIL.

The protein belongs to the TrpF family.

The enzyme catalyses N-(5-phospho-beta-D-ribosyl)anthranilate = 1-(2-carboxyphenylamino)-1-deoxy-D-ribulose 5-phosphate. It functions in the pathway amino-acid biosynthesis; L-tryptophan biosynthesis; L-tryptophan from chorismate: step 3/5. This Priestia megaterium (strain ATCC 12872 / QMB1551) (Bacillus megaterium) protein is N-(5'-phosphoribosyl)anthranilate isomerase (trpF).